We begin with the raw amino-acid sequence, 218 residues long: Ras-related protein Rab-4A (218 aa).

Residues glycine 23, threonine 24, glycine 25, lysine 26, serine 27, cysteine 28, serine 42, histidine 44, and threonine 45 each contribute to the GTP site. Mg(2+) is bound at residue serine 27. The short motif at histidine 44–glutamate 49 is the Switch 1 element. Threonine 45 and aspartate 68 together coordinate Mg(2+). The short motif at alanine 70–threonine 79 is the Switch 2 element. Glycine 71 is a GTP binding site. 5-glutamyl serotonin is present on glutamine 72. Residues asparagine 126, lysine 127, aspartate 129, alanine 157, and leucine 158 each contribute to the GTP site. Residue serine 190 is modified to Phosphoserine. A Phosphoserine; by CDK1 modification is found at serine 204. S-geranylgeranyl cysteine attachment occurs at residues cysteine 216 and cysteine 218. Cysteine 218 is subject to Cysteine methyl ester.

The protein belongs to the small GTPase superfamily. Rab family. In terms of assembly, interacts with RAB11FIP1, RABEP1, ZFYVE20 and RUFY1. Interacts with SGSM1, SGSM2 and SGSM3. Interacts (membrane-bound form) with NDRG1; the interaction involves NDRG1 in vesicular recycling of E-cadherin. Interacts (in GTP-bound form) with GRIPAP1. Interacts with RABEP1 and RBSN. Does not interact with HPS4. Mg(2+) is required as a cofactor. In terms of processing, serotonylation of Gln-72 by TGM2 during activation and aggregation of platelets leads to constitutive activation of GTPase activity. Phosphorylated by CDK1 kinase during mitosis.

It is found in the membrane. The protein localises to the cytoplasm. It localises to the early endosome membrane. The protein resides in the recycling endosome membrane. The enzyme catalyses GTP + H2O = GDP + phosphate + H(+). Its activity is regulated as follows. Regulated by guanine nucleotide exchange factors (GEFs) which promote the exchange of bound GDP for free GTP. Regulated by GTPase activating proteins (GAPs) which increase the GTP hydrolysis activity. Inhibited by GDP dissociation inhibitors (GDIs). Its function is as follows. The small GTPases Rab are key regulators of intracellular membrane trafficking, from the formation of transport vesicles to their fusion with membranes. Rabs cycle between an inactive GDP-bound form and an active GTP-bound form that is able to recruit to membranes different sets of downstream effectors directly responsible for vesicle formation, movement, tethering and fusion. RAB4A is involved in protein transport. Also plays a role in vesicular traffic. Mediates VEGFR2 endosomal trafficking to enhance VEGFR2 signaling. Acts as a regulator of platelet alpha-granule release during activation and aggregation of platelets. The chain is Ras-related protein Rab-4A (RAB4A) from Bos taurus (Bovine).